Consider the following 681-residue polypeptide: DNA ligase (681 aa).

NAD(+) contacts are provided by residues 34-38, 83-84, and glutamate 115; these read DAEYD and SL. Lysine 117 acts as the N6-AMP-lysine intermediate in catalysis. NAD(+) contacts are provided by arginine 138, glutamate 185, lysine 301, and lysine 325. Cysteine 419, cysteine 422, cysteine 437, and cysteine 443 together coordinate Zn(2+). The 80-residue stretch at 602–681 folds into the BRCT domain; the sequence is RKSDVLAGQT…AALLALIGER (80 aa).

Belongs to the NAD-dependent DNA ligase family. LigA subfamily. Mg(2+) is required as a cofactor. Requires Mn(2+) as cofactor.

It carries out the reaction NAD(+) + (deoxyribonucleotide)n-3'-hydroxyl + 5'-phospho-(deoxyribonucleotide)m = (deoxyribonucleotide)n+m + AMP + beta-nicotinamide D-nucleotide.. Functionally, DNA ligase that catalyzes the formation of phosphodiester linkages between 5'-phosphoryl and 3'-hydroxyl groups in double-stranded DNA using NAD as a coenzyme and as the energy source for the reaction. It is essential for DNA replication and repair of damaged DNA. The polypeptide is DNA ligase (Chloroflexus aggregans (strain MD-66 / DSM 9485)).